A 298-amino-acid chain; its full sequence is NAD kinase (298 aa).

Asp-80 functions as the Proton acceptor in the catalytic mechanism. NAD(+) is bound by residues 80-81 (DG), 154-155 (ND), Arg-182, Asp-184, 195-200 (TAYALS), Ala-219, and Gln-253.

It belongs to the NAD kinase family. A divalent metal cation serves as cofactor.

Its subcellular location is the cytoplasm. The catalysed reaction is NAD(+) + ATP = ADP + NADP(+) + H(+). Functionally, involved in the regulation of the intracellular balance of NAD and NADP, and is a key enzyme in the biosynthesis of NADP. Catalyzes specifically the phosphorylation on 2'-hydroxyl of the adenosine moiety of NAD to yield NADP. The chain is NAD kinase from Paracidovorax citrulli (strain AAC00-1) (Acidovorax citrulli).